A 372-amino-acid chain; its full sequence is Carbamoyl phosphate synthase small chain (372 aa).

The interval 1-179 (MRAILALEDG…ALVTGKTLPP (179 aa)) is CPSase. L-glutamine is bound by residues serine 45, glycine 231, and glycine 233. The Glutamine amidotransferase type-1 domain occupies 183–369 (DIVAFDFGIK…RKMIAASKRQ (187 aa)). Cysteine 258 functions as the Nucleophile in the catalytic mechanism. L-glutamine-binding residues include leucine 259, glutamine 262, asparagine 300, glycine 302, and phenylalanine 303. Active-site residues include histidine 342 and glutamate 344.

It belongs to the CarA family. In terms of assembly, composed of two chains; the small (or glutamine) chain promotes the hydrolysis of glutamine to ammonia, which is used by the large (or ammonia) chain to synthesize carbamoyl phosphate. Tetramer of heterodimers (alpha,beta)4.

The enzyme catalyses hydrogencarbonate + L-glutamine + 2 ATP + H2O = carbamoyl phosphate + L-glutamate + 2 ADP + phosphate + 2 H(+). The catalysed reaction is L-glutamine + H2O = L-glutamate + NH4(+). It functions in the pathway amino-acid biosynthesis; L-arginine biosynthesis; carbamoyl phosphate from bicarbonate: step 1/1. It participates in pyrimidine metabolism; UMP biosynthesis via de novo pathway; (S)-dihydroorotate from bicarbonate: step 1/3. In terms of biological role, small subunit of the glutamine-dependent carbamoyl phosphate synthetase (CPSase). CPSase catalyzes the formation of carbamoyl phosphate from the ammonia moiety of glutamine, carbonate, and phosphate donated by ATP, constituting the first step of 2 biosynthetic pathways, one leading to arginine and/or urea and the other to pyrimidine nucleotides. The small subunit (glutamine amidotransferase) binds and cleaves glutamine to supply the large subunit with the substrate ammonia. The sequence is that of Carbamoyl phosphate synthase small chain from Akkermansia muciniphila (strain ATCC BAA-835 / DSM 22959 / JCM 33894 / BCRC 81048 / CCUG 64013 / CIP 107961 / Muc).